A 145-amino-acid chain; its full sequence is Large ribosomal subunit protein uL15 (145 aa).

The segment at Met-1–Leu-57 is disordered. Residues Arg-21 to Gly-31 show a composition bias toward gly residues.

The protein belongs to the universal ribosomal protein uL15 family. Part of the 50S ribosomal subunit.

Binds to the 23S rRNA. This chain is Large ribosomal subunit protein uL15, found in Pseudomonas fluorescens (strain Pf0-1).